Reading from the N-terminus, the 1414-residue chain is Calcium-transporting ATPase 2 (1414 aa).

Disordered stretches follow at residues M1–L231 and A265–A294. Over M1–K327 the chain is Cytoplasmic. Low complexity-rich tracts occupy residues P33 to P53 and S75 to S96. The span at D179–K189 shows a compositional bias: basic and acidic residues. Over residues K190 to K201 the composition is skewed to basic residues. The segment covering K202–S229 has biased composition (basic and acidic residues). Residues V328 to L348 traverse the membrane as a helical segment. The Vacuolar segment spans residues G349–D370. The chain crosses the membrane as a helical span at residues W371–N391. Residues D392–L541 lie on the Cytoplasmic side of the membrane. The helical transmembrane segment at A542–I562 threads the bilayer. Over R563–Q585 the chain is Vacuolar. The chain crosses the membrane as a helical span at residues I586–V606. The Ca(2+) site is built by V595 and E600. Residues T607–K1040 lie on the Cytoplasmic side of the membrane. D642 acts as the 4-aspartylphosphate intermediate in catalysis. Residues D642 and T644 each coordinate Mg(2+). Residues T644, E737, R779, T909 to D911, R958, and K964 each bind ATP. Residue D983 participates in Mg(2+) binding. N986 contacts ATP. Residues F1041–V1061 form a helical membrane-spanning segment. Residue N1049 coordinates Ca(2+). The Vacuolar segment spans residues A1062–S1068. A helical membrane pass occupies residues V1069–A1089. Residues N1079 and D1083 each contribute to the Ca(2+) site. The Cytoplasmic segment spans residues L1090 to K1118. A helical membrane pass occupies residues M1119 to L1139. At K1140 to E1153 the chain is on the vacuolar side. The helical transmembrane segment at L1154–L1171 threads the bilayer. Residues N1172–Y1191 lie on the Cytoplasmic side of the membrane. The helical transmembrane segment at F1192–A1212 threads the bilayer. E1208 contacts Ca(2+). Residues A1213–D1223 lie on the Vacuolar side of the membrane. The helical transmembrane segment at W1224 to T1244 threads the bilayer. Residues P1245 to V1414 lie on the Cytoplasmic side of the membrane. Positions P1376–V1414 are disordered.

This sequence belongs to the cation transport ATPase (P-type) (TC 3.A.3) family.

Its subcellular location is the vacuole membrane. The enzyme catalyses Ca(2+)(in) + ATP + H2O = Ca(2+)(out) + ADP + phosphate + H(+). In terms of biological role, this magnesium-dependent enzyme catalyzes the hydrolysis of ATP coupled with the transport of calcium. Transports calcium to the vacuole and participates in the control of cytosolic free calcium. This Cryptococcus neoformans var. grubii serotype A (strain H99 / ATCC 208821 / CBS 10515 / FGSC 9487) (Filobasidiella neoformans var. grubii) protein is Calcium-transporting ATPase 2.